The following is a 1799-amino-acid chain: MSYPNPPPPPKGSASFSSSSSDPFNQTNQLPYDSQFPPQHAFAHPSAPNPGAGGAGVAPPGQGGQYAPYYDNEPEMGGRWEGGGMGRETWASESGWSQNEPNYPPSDYHGGPGYLPSRASTPTFEGSNAGHRPRDPYPAWTVDANIPLSKEEIEDVLIDLANKFGFQKDSSRNVYDFLMIQLDSRASRMSPNQALLTLHADYIGGEHANYRKWYFAAQLDLDDAIGAVQNPGLNRVRSVARRGGKTKNPLATAQEKSLESATSRWRTAMNNMSQYDRLRQVALYLLCWGEAAQVRFMPECLCFIFKCADDYYRSPECQNRQEAVPEGLYLRAVIKPLYRFLRDQGYEVVDGKFLRRERDHDKVIGYDDVNQLFWYPEGISRITLNDNTRLVDIPPAQRFMKFDRIDWNKVFFKTYLEKRSFFHLLVNFNRIWVLHISVFWFFTAYNAPSIYAPSGSTTATTPMAWSMTGLGGFVATLIMIAATLAEFSYIPTTWNNTSHLTRRLIFLLIILAITGGPSIYIAFFNQTGHVALILGIVQFFCSVVATIAFATLPSGRMFGDRVAGKSRKYLANQTFTASYPALGFYPRVASFLLWFLVFGCKFTESYFFLTLSFRDPMKVMNGMKVQNCHDKYFGNGLCTNQPAFALAVMFVMDLTLFFLDTFLWYVIWNTVFSIARSFAIGMSIWTPWKDIFARLPKRIYAKILATDDMEVKYKPKVLVSQVWNAVIISMYREHLLSIEHVQKLLYHQIQSDQPGKRTLRAPAFFISQSEKGSKAEFFPKGSEAERRICFFAQSLTTSIPAPIPVDAMPTFTVLVPHYSEKILLSLREIIREEDQNTRVTLLEYLKQLHPVEWDNFVRDTKILAEESDAFNGGNPFASDEKEEAKKADDIPFYTIGFKSAAPEYTLRTRIWASLRAQTLYRTVSGFMNYSKAIKLLYRVENPEVVQLFGGNTDQLERELERMARRKFKFVVSMQRYSKFNKEEHENAEFLLRAYPDLQIAYLDEEPPRKDGGESRIFSALIDGHSEIMPNGRRRPKFRIELPGNPILGDGKSDNQNHAIVFYRGEYLQLIDANQDNYLEECLKIRNVLGEFEEFKVSTQSPYAAQGHADFAKFPVAILGAREYIFSENIGILGDIAAGKEQTFGTLAARSLSYIGGKLHYGHPDFLNAIYMNTRGGVSKAQKGLHLNEDIFAGMLAFGRGGRIKHSEYYQCGKGRDLGFGTILNFQTKIGTGMGEQMLSREYYYLGTQLPIDRFLTFYYGHPGFHINNILVMMSVQVFMLALVFLGTLNKQLTVCRYSSGGDILPGQSGCYNLVPVFKWIKRCIISIFIVFWIAFVPLFVQELTERGTGRAILRLCKHFLSLSPVFEVFSTQIYMHSILNDLTFGGARYIATGRGFATTRISFSILYSRFAGPSIYLGMRTLVLLLFITLTVWVPHLIYFWITVVGLCVAPFLFNPHQFAIADFIIDYREFLRWMSRGNSRTHANSWVGYCRLSRTRVTGFKRKRLGLPSEKLSSDVPRAPWKAILIGEIIGPICLAILFVICYLFIKSFAVDGQIQPGLVRIAIIALGPIVWNMALLITLFLISVFLGPCLNSYTHQFGATMAALAHFGAVAGMLVFFELLWFLELWNTSHAVLGIIAVISVQRCIFKFLIAVFLSREFKHDETNRAWWTGVWFNRGLGSHALSQPAREFVVKTIEMGLYSADFIACHLLLALLTIPMFIPYFDRVHATMLFWLAPNQQIRPPIYSFRQRSQRRKIVFKYGLLYLIIQGIFIALIVVPIIFKDVAGLTPKSVPFNGII.

Positions 1–11 (MSYPNPPPPPK) are enriched in pro residues. The disordered stretch occupies residues 1 to 136 (MSYPNPPPPP…SNAGHRPRDP (136 aa)). The segment covering 12 to 23 (GSASFSSSSSDP) has biased composition (low complexity). Positions 51 to 64 (GAGGAGVAPPGQGG) are enriched in gly residues. Positions 91 to 101 (ASESGWSQNEP) are enriched in polar residues. 16 helical membrane-spanning segments follow: residues 431–451 (IWVL…PSIY), 470–490 (LGGF…FSYI), 504–524 (LIFL…IAFF), 530–550 (VALI…IAFA), 591–611 (FLLW…FLTL), 648–668 (VMFV…YVIW), 1268–1288 (NILV…LGTL), 1323–1343 (CIIS…VQEL), 1422–1442 (LVLL…YFWI), 1446–1466 (GLCV…DFII), 1527–1547 (IGEI…YLFI), 1563–1583 (IAII…TLFL), 1605–1625 (ALAH…LWFL), 1635–1655 (LGII…IAVF), 1704–1724 (DFIA…IPYF), and 1762–1782 (GLLY…PIIF).

The protein belongs to the glycosyltransferase 48 family. In terms of assembly, component of the 1,3-beta-glucan synthase (GS) complex composed of a catalytic subunit FKS1 and a regulatory subunit RHO1.

Its subcellular location is the cell membrane. It carries out the reaction [(1-&gt;3)-beta-D-glucosyl](n) + UDP-alpha-D-glucose = [(1-&gt;3)-beta-D-glucosyl](n+1) + UDP + H(+). Its activity is regulated as follows. Activated by magnesium ions. Inhibited by caspofungin and cilofungin. Its function is as follows. Catalytic subunit of the 1,3-beta-glucan synthase (GS) complex. Synthesizes 1,3-beta-glucan, a major structural component of the yeast cell wall. Involved in cell wall synthesis, maintenance and remodeling. This Cryptococcus neoformans var. grubii serotype A (strain H99 / ATCC 208821 / CBS 10515 / FGSC 9487) (Filobasidiella neoformans var. grubii) protein is 1,3-beta-glucan synthase component FKS1.